Consider the following 32-residue polypeptide: Protamine-3A (32 aa).

Residues P1–R32 are disordered.

Testis.

It localises to the nucleus. Its subcellular location is the chromosome. Protamines substitute for histones in the chromatin of sperm during the haploid phase of spermatogenesis. They compact sperm DNA into a highly condensed, stable and inactive complex. The protein is Protamine-3A of Oncorhynchus mykiss (Rainbow trout).